Consider the following 304-residue polypeptide: MGINMLDELKEDLVGIDIRFDEPLKRYTYTKVGGPADYLAFPRNRYELSRIVKFANKHNIPWMVLGNASNLIVRDGGIRGFVIMFDKLNGIAVNGYQVEAEAGANLIATTKVACFHSLTGFEFAAGIPGSIGGAVFMNAGAYGGEIAHILVSAQVLTKDGDIRTIDARDMRFGYRRSVLQETGEVIISAKFNLKPGDYEQIKHEMNRLNHLRELKQPLEYPSCGSVFKRPPGHFAGQLIMEANLKGHRIGGVEVSTKHAGFMVNVDQGTAKDYEDLIADVIAKVKENSGVTLEPEVRIIGDKLN.

An FAD-binding PCMH-type domain is found at 31–196 (KVGGPADYLA…ISAKFNLKPG (166 aa)). The active site involves Arg175. Residue Ser225 is the Proton donor of the active site. Glu295 is an active-site residue.

It belongs to the MurB family. FAD serves as cofactor.

The protein localises to the cytoplasm. The catalysed reaction is UDP-N-acetyl-alpha-D-muramate + NADP(+) = UDP-N-acetyl-3-O-(1-carboxyvinyl)-alpha-D-glucosamine + NADPH + H(+). It participates in cell wall biogenesis; peptidoglycan biosynthesis. Cell wall formation. This Streptococcus thermophilus (strain ATCC BAA-491 / LMD-9) protein is UDP-N-acetylenolpyruvoylglucosamine reductase.